A 461-amino-acid polypeptide reads, in one-letter code: ATP synthase subunit beta 2 (461 aa).

151-158 (GGAGVGKT) provides a ligand contact to ATP.

The protein belongs to the ATPase alpha/beta chains family. F-type ATPases have 2 components, CF(1) - the catalytic core - and CF(0) - the membrane proton channel. CF(1) has five subunits: alpha(3), beta(3), gamma(1), delta(1), epsilon(1). CF(0) has three main subunits: a(1), b(2) and c(9-12). The alpha and beta chains form an alternating ring which encloses part of the gamma chain. CF(1) is attached to CF(0) by a central stalk formed by the gamma and epsilon chains, while a peripheral stalk is formed by the delta and b chains.

The protein localises to the cell inner membrane. It carries out the reaction ATP + H2O + 4 H(+)(in) = ADP + phosphate + 5 H(+)(out). Functionally, produces ATP from ADP in the presence of a proton gradient across the membrane. The catalytic sites are hosted primarily by the beta subunits. The chain is ATP synthase subunit beta 2 from Photobacterium profundum (strain SS9).